Consider the following 286-residue polypeptide: Nucleotide-binding protein Sfum_2066 (286 aa).

8–15 (GLSGSGKS) contributes to the ATP binding site. Position 59 to 62 (59 to 62 (DIRE)) interacts with GTP.

It belongs to the RapZ-like family.

Its function is as follows. Displays ATPase and GTPase activities. This Syntrophobacter fumaroxidans (strain DSM 10017 / MPOB) protein is Nucleotide-binding protein Sfum_2066.